A 1400-amino-acid chain; its full sequence is MMASFQRSNSHDKVRRIVAEEGRTARNLIAWSVPLESKDDDGKPKCQTGGKSKRTIQGTHKTTKQSTAVDCKITSSTTGDKHFDKSPTKTRHPRKIDLRARYWAFLFDNLRRAVDEIYVTCESDQSVVECKEVLMMLDNYVRDFKALIDWIQLQEKLEKTDAQSRPTSLAWEVKKMSPGRHVIPSPSTDRINVTSNARRSLNFGGSTGTVPAPRLAPTGVSWADKVKAHHTGSTASSEITPAQSCPPMTVQKASRKNERKDAEGWETVQRGRPIRSRSTAVMPKVSLATEATRSKDDSDKENVCLLPDESIQKGQFVGDGTSNTIESHPKDSLHSCDHPLAEKTQFTVSTLDDVKNSGSIRDNYVRTSEISAVHIDTECVSVMLQAGTPPLQVNEEKFPAEKARIENEMDPSDISNSMAEVLAKKEELADRLEKANEEAIASAIAEEEQLTREIEAEENNDINIETDNDSDFSASMGSGSVSFCGMSMDWNDVLADYEARESWRQNTSWGDIVEEEPARPPGHGIHMHEKLSSPSRKRTIAESKKKHEEKQMKAQQLREKLREEKTLKLQKLLEREKDVRKWKEELLDQRRRMMEEKLLHAEFKREVQLQAIVKKAQEEEAKVNEIAFINTLEAQNKRHDVLSKLKEYEQRLNELQEERQRRQEEKQARDEAVQERKRALEAERQARVEELLMKRKEQEARIEQQRQEKEKAREDAARERARDREERLAALTAAQQEAMEELQKKIQLKHDESIRRHMEQIEQRKEKAAELSSGRHANTDYAPKLTPYERKKQCSLCNVLISSEVYLFSHVKGRKHQQAVRENTSIQGRELSDEEVEHLSLKKYIIDIVVESTAPAEALKDGEERQKNKKKAKKIKARMNFRAKEYESLMETKNSGSDSPYKAKLQRLAKDLLKQVQVQDSGSWANNKVSALDRTLGEITRILEKENVADQIAFQAAGGLTALEHILQAVVPATNVNTVLRIPPKSLCNAINVYNLTCNNCSENCSDVLFSNKITFLMDLLIHQLTVYVPDENNTILGRNTNKQVFEGLTTGLLKVSAVVLGCLIANRPDGNCQPATPKIPTQEMKNKPSQGDPFNNRVQDLISYVVNMGLIDKLCACFLSVQGPVDENPKMAIFLQHAAGLLHAMCTLCFAVTGRSYSIFDNNRQDPTGLTAALQATDLAGVLHMLYCVLFHGTILDPSTASPKENYTQNTIQVAIQSLRFFNSFAALHLPAFQSIVGAEGLSLAFRHMASSLLGHCSQVSCESLLHEVIVCVGYFTVNHPDNQVIVQSGRHPTVLQKLCQLPFQYFSDPRLIKVLFPSLIAACYNNHQNKIILEQEMSCVLLATFIQDLAQTPGQAENQPYQPKGKCLGSQDYLELANRFPQQAWEEARQFFLKKEKK.

Disordered regions lie at residues 36-61, 226-277, 517-550, and 701-723; these read ESKD…GTHK, VKAH…IRSR, PARP…HEEK, and RIEQ…RARD. Residues 231–243 show a composition bias toward polar residues; that stretch reads TGSTASSEITPAQ. Residues 539-550 are compositionally biased toward basic and acidic residues; it reads TIAESKKKHEEK. A C2H2-type zinc finger spans residues 792-816; that stretch reads KQCSLCNVLISSEVYLFSHVKGRKH. Serine 832 is modified (phosphoserine).

As to quaternary structure, interacts with CCNA2/CDK2 complex, but not with CCNA2/CDC2, CCNB1/CDC2 or CCNE1/CDK2 complexes, at multiple phases of the cell cycle, including S and G2/M. Post-translationally, phosphorylated in vitro by the CCNA2/CDK2 complex. In terms of tissue distribution, widely expressed with high expression in testis. Isoform 1 is detected in various tissues, including retina, fetal and adult brain. Isoform 2 is expressed in the retina at high levels, and in the brain at very low levels.

It is found in the endoplasmic reticulum. Its subcellular location is the nucleus. Its function is as follows. CCNA2/CDK2 regulatory protein that transiently maintains CCNA2 in the cytoplasm. The protein is S phase cyclin A-associated protein in the endoplasmic reticulum of Homo sapiens (Human).